The primary structure comprises 557 residues: Coiled-coil domain-containing protein 22 homolog (557 aa).

2 coiled-coil regions span residues 260–350 (RLGQ…LQSQ) and 489–554 (ELTA…AGRN).

Belongs to the CCDC22 family.

The chain is Coiled-coil domain-containing protein 22 homolog from Anopheles gambiae (African malaria mosquito).